Reading from the N-terminus, the 318-residue chain is Putative S-adenosyl-L-methionine-dependent methyltransferase MMAR_1595 (318 aa).

S-adenosyl-L-methionine contacts are provided by residues glutamate 132 and 161 to 162 (DL).

Belongs to the UPF0677 family.

Its function is as follows. Exhibits S-adenosyl-L-methionine-dependent methyltransferase activity. The sequence is that of Putative S-adenosyl-L-methionine-dependent methyltransferase MMAR_1595 from Mycobacterium marinum (strain ATCC BAA-535 / M).